We begin with the raw amino-acid sequence, 810 residues long: MAKSQRDLKGWQYFLDDAELNNTDSVNGEPTTPSRRSRRGKSTSSQKISLKREEDELEIKEGDFLLVQQDNNSPEVAIVKEIKFGNDNFLDIIVSWFIRMRDIEEADLPKVEEYKERSQLNENELFITSYLDEVKLGEIIDKVNILSEEEFNNDIVIDDSNKASTFICRRGCDSAGELFTDVFDFRDLCVLFEKNHHEFIEFIRRKTVPVAYNANKTHDKSKSIKDKLDEVETKKPKQKTVSKQILDEEEENNDSSDEFESAIDLQDEPSSDELESDEDASESKNKSPRKRKASSKPKAVKEKQKRVKIPNNHSKFDDESRQFITSVVSPLNKRMKIKDSSKPSILALSPRKPKKGVSKGENGKNGSLGVDASSEAFKELKEKLHTSTRLSSLPCREDEFTSIYLNLETAIQEQTGCCLYVSGTPGVGKTATVREVIAQLRELTEMGELNDFDYLEINGLKLLSPNVAYEKLWEKISGLKVTASNAALLLESYFSQDTPRKPLIVLMDELDQIVTKKQNVMYNFFNWPTYSNSKLIVIAVANTMDLPERVLSNKISSRLGLRRIQFIGYTFEQLGSIIKHRLDMLTKQNKRKVIINSDAIGFASRKVASVSGDARRALTICRRAVEIAEKDFLSSKEDPGNEQEIENESYHVQISHISKAINETVNSPISQFLMSLPFASKLVLAGVLLRMKRSGLAENSLGDIIDEMKNSLTMLTSRDGDKVLEAIDSKMTLIDLLYGNGLLQNLDSTFNSKDTNIRILRFKYIVNELVENGILQQNVRGERHSLINLNISEEEIVSVLKRDKEISSIL.

The span at 21 to 30 (NNTDSVNGEP) shows a compositional bias: polar residues. The tract at residues 21–52 (NNTDSVNGEPTTPSRRSRRGKSTSSQKISLKR) is disordered. Residues 57-183 (LEIKEGDFLL…SAGELFTDVF (127 aa)) enclose the BAH domain. Residues 219 to 235 (DKSKSIKDKLDEVETKK) are compositionally biased toward basic and acidic residues. Disordered stretches follow at residues 219 to 317 (DKSK…SKFD) and 334 to 370 (RMKIKDSSKPSILALSPRKPKKGVSKGENGKNGSLGV). Acidic residues predominate over residues 247–280 (DEEEENNDSSDEFESAIDLQDEPSSDELESDEDA). Positions 286 to 295 (KSPRKRKASS) are enriched in basic residues. Position 423–431 (423–431 (GTPGVGKTA)) interacts with ATP. Mg(2+) is bound by residues aspartate 508 and glutamate 509. 3 residues coordinate ATP: glutamate 509, asparagine 542, and arginine 615.

It belongs to the ORC1 family. ORC is composed of six subunits.

It localises to the nucleus. Its function is as follows. Component of the origin recognition complex (ORC) that binds origins of replication. It has a role in both chromosomal replication and mating type transcriptional silencing. Binds to the ARS consensus sequence (ACS) of origins of replication in an ATP-dependent manner. In Debaryomyces hansenii (strain ATCC 36239 / CBS 767 / BCRC 21394 / JCM 1990 / NBRC 0083 / IGC 2968) (Yeast), this protein is Origin recognition complex subunit 1 (ORC1).